A 241-amino-acid polypeptide reads, in one-letter code: MSTNPKPAFRRILLKLSGEALMGSEGFGIDPSVLDRMAQEIKELVELGIQVGVVIGGGNLFRGEGLAKAGMNRVVGDHMGMLATVMNGLAMRDALHRAYVNARLMSAIPLKGVCDDYNWAEAISLLKSGRVVIFAAGTGNPFCTTDSAACLRGIEIEADVVLKGTKVDGVYSADPMKDPEAVKYDELSYAEVLDKELKVMDLSAFTMARDHDMPILVFNMNKPGALRRVIMGEGEGTIIKK.

Residue 15 to 18 coordinates ATP; that stretch reads KLSG. The interval 23 to 28 is involved in allosteric activation by GTP; the sequence is GSEGFG. Gly57 serves as a coordination point for UMP. The ATP site is built by Gly58 and Arg62. Residues Asp77 and 138–145 each bind UMP; that span reads TGNPFCTT. The ATP site is built by Thr165, Tyr171, and Asp174.

This sequence belongs to the UMP kinase family. As to quaternary structure, homohexamer.

It is found in the cytoplasm. The enzyme catalyses UMP + ATP = UDP + ADP. It functions in the pathway pyrimidine metabolism; CTP biosynthesis via de novo pathway; UDP from UMP (UMPK route): step 1/1. Allosterically activated by GTP. Inhibited by UTP. In terms of biological role, catalyzes the reversible phosphorylation of UMP to UDP. The chain is Uridylate kinase from Shewanella amazonensis (strain ATCC BAA-1098 / SB2B).